The following is a 146-amino-acid chain: Large ribosomal subunit protein uL15 (146 aa).

Residues 1 to 13 (MKLHELHSAEGSR) show a composition bias toward basic and acidic residues. A disordered region spans residues 1–55 (MKLHELHSAEGSRRNRKRVGRGTSSGYGKTSGRGQKGQLARQGGHTRLGFEGGQM). Residues 23 to 35 (TSSGYGKTSGRGQ) show a composition bias toward gly residues.

This sequence belongs to the universal ribosomal protein uL15 family. As to quaternary structure, part of the 50S ribosomal subunit.

Its function is as follows. Binds to the 23S rRNA. The sequence is that of Large ribosomal subunit protein uL15 from Lactobacillus helveticus (strain DPC 4571).